We begin with the raw amino-acid sequence, 1651 residues long: A.superbus venom factor 2 (1651 aa).

Residues 1 to 22 (MEGMALYLVAALLIGFPGSSHG) form the signal peptide. N-linked (GlcNAc...) asparagine glycosylation is present at Asn189. Mg(2+)-binding residues include Pro519, Asp542, Val543, and Asp545. 12 disulfides stabilise this stretch: Cys547–Cys808, Cys616–Cys651, Cys684–Cys711, Cys685–Cys718, Cys698–Cys719, Cys864–Cys1501, Cys1346–Cys1477, Cys1377–Cys1446, Cys1494–Cys1499, Cys1506–Cys1578, Cys1525–Cys1649, and Cys1625–Cys1634. Residues 657 to 739 (RRRRSSVLLL…QRESELFLAR (83 aa)) constitute a propeptide that is removed on maturation. Positions 661–739 (SSVLLLDSKA…QRESELFLAR (79 aa)) are C3a-like domain. In terms of domain architecture, Anaphylatoxin-like spans 684–719 (CCEDGMHENPMGYTCEKRAKYTQEGDACKAAFLECC). The segment at 743 to 754 (EDEFFEEDNIIS) is factor B binding site. The propeptide occupies 992–1269 (HLIITPSGSG…VMVFQALAEY (278 aa)). Positions 992-1269 (HLIITPSGSG…VMVFQALAEY (278 aa)) are C3d-like domain. The factor H binding site stretch occupies residues 1197 to 1259 (VLMAASTGRD…GGTYGQTQAT (63 aa)). 2 N-linked (GlcNAc...) asparagine glycosylation sites follow: Asn1282 and Asn1352. Positions 1506–1649 (CSLLNQQKKI…LSNTLTIFGC (144 aa)) constitute an NTR domain.

The protein belongs to the venom complement C3 homolog family. Heterotrimer of alpha, beta and gamma chains; disulfide-linked. Is active with factor B in the presence of factor D. In terms of processing, first processed by the removal of 4 Arg residues by furin-type protease, forming two chains, alpha and gamma/beta precursor, linked by a disulfide bond. This mature AVF is composed of three chains: alpha, gamma and beta. As to expression, expressed by the venom gland.

It is found in the secreted. Its function is as follows. Complement-activating protein in snake venom. It is a structural and functional analog of complement component C3b, the activated form of C3. It binds factor B (CFB), which is subsequently cleaved by factor D (CFD) to form the bimolecular complex AVF/Bb. AVF/Bb is a C3 convertase that cleaves complement component C3, but not C5 (as do CVF/Bb). In Austrelaps superbus (Lowland copperhead snake), this protein is A.superbus venom factor 2.